Consider the following 275-residue polypeptide: Reticulon-like protein B1 (275 aa).

Composition is skewed to basic and acidic residues over residues 1–10 (MAEEHKHDES) and 20–38 (VVER…HHGG). The interval 1–68 (MAEEHKHDES…PSSPSSSMKS (68 aa)) is disordered. At alanine 2 the chain carries N-acetylalanine. A compositionally biased stretch (low complexity) spans 59 to 68 (PSSPSSSMKS). In terms of domain architecture, Reticulon spans 89–274 (PADIFMWKNK…PLGPLKNKKK (186 aa)). A run of 3 helical transmembrane segments spans residues 99–119 (KMSG…ELME), 120–140 (YHLL…LFLW), and 194–214 (FLIA…FNFL).

In terms of assembly, interacts with VirB2. As to expression, predominantly expressed in root tissues.

It is found in the endoplasmic reticulum membrane. The protein localises to the cell membrane. Functionally, plays a role in the Agrobacterium-mediated plant transformation via its interaction with VirB2, the major component of the T-pilus. In Arabidopsis thaliana (Mouse-ear cress), this protein is Reticulon-like protein B1 (RTNLB1).